A 111-amino-acid chain; its full sequence is UPF0125 protein SO_1475 (111 aa).

Positions 88–111 (VRRRRADKAKDEGRANKVTGGRVS) are disordered.

It belongs to the UPF0125 (RnfH) family.

This Shewanella oneidensis (strain ATCC 700550 / JCM 31522 / CIP 106686 / LMG 19005 / NCIMB 14063 / MR-1) protein is UPF0125 protein SO_1475.